The sequence spans 328 residues: Cytochrome c biogenesis protein CcsA (328 aa).

The next 8 membrane-spanning stretches (helical) occupy residues isoleucine 13–leucine 33, glycine 46–glycine 66, leucine 73–phenylalanine 93, leucine 101–leucine 121, methionine 146–isoleucine 166, isoleucine 234–asparagine 254, tryptophan 263–isoleucine 283, and alanine 295–leucine 315.

It belongs to the CcmF/CycK/Ccl1/NrfE/CcsA family. As to quaternary structure, may interact with Ccs1.

The protein resides in the plastid. It is found in the chloroplast thylakoid membrane. Functionally, required during biogenesis of c-type cytochromes (cytochrome c6 and cytochrome f) at the step of heme attachment. This chain is Cytochrome c biogenesis protein CcsA, found in Arabidopsis thaliana (Mouse-ear cress).